Consider the following 261-residue polypeptide: Undecaprenyl-diphosphatase (261 aa).

A run of 8 helical transmembrane segments spans residues Thr16 to Phe36, Gly40 to Trp60, Phe82 to Ile102, Leu107 to Ala127, Ile140 to Val160, Phe183 to Met203, Ser211 to Ile231, and Phe239 to Leu259.

The protein belongs to the UppP family.

It localises to the cell membrane. The enzyme catalyses di-trans,octa-cis-undecaprenyl diphosphate + H2O = di-trans,octa-cis-undecaprenyl phosphate + phosphate + H(+). Functionally, catalyzes the dephosphorylation of undecaprenyl diphosphate (UPP). Confers resistance to bacitracin. The sequence is that of Undecaprenyl-diphosphatase from Desulforudis audaxviator (strain MP104C).